A 306-amino-acid chain; its full sequence is Tyrosine recombinase XerC (306 aa).

Positions 2–81 (AKASAAIEEF…ALRQFYGFLV (80 aa)) constitute a Core-binding (CB) domain. Residues 102 to 283 (PLPKTLSHKE…DAARLVALVN (182 aa)) enclose the Tyr recombinase domain. Active-site residues include Arg-146, Lys-170, His-235, Arg-238, and His-261. Tyr-270 serves as the catalytic O-(3'-phospho-DNA)-tyrosine intermediate.

The protein belongs to the 'phage' integrase family. XerC subfamily. Forms a cyclic heterotetrameric complex composed of two molecules of XerC and two molecules of XerD.

Its subcellular location is the cytoplasm. Its function is as follows. Site-specific tyrosine recombinase, which acts by catalyzing the cutting and rejoining of the recombining DNA molecules. The XerC-XerD complex is essential to convert dimers of the bacterial chromosome into monomers to permit their segregation at cell division. It also contributes to the segregational stability of plasmids. This chain is Tyrosine recombinase XerC, found in Erythrobacter litoralis (strain HTCC2594).